A 322-amino-acid polypeptide reads, in one-letter code: MLNSFKLSLQYILPKLWLTRLAGWGASKRAGWLTKLVIDLFVKYYKVDMTETQKPDTASYRTFNDFFVRPLRDDVRPLNTDPNILVMPADGVISQLGRIEEDKILQAKGHNYSLEALLAGNYLMADKFRNGTFVTTYLSPRDYHRVHMPCNGILREMIYVPGELFSVNHLTAQNVPNLFARNERVICLFDTEFGPMAQILVGATIVGSIETVWAGTITPPREGIIKRWTWPAGENEDSVALLKGQEMGRFKLGSTVINLFAPGKVDLIESLANLSVTKIGQPLATSTEAFVAPEVEPVPLPEEEIKAEHDASPLVDDKKDET.

Residues D90, H147, and S254 each act as charge relay system; for autoendoproteolytic cleavage activity in the active site. The active-site Schiff-base intermediate with substrate; via pyruvic acid; for decarboxylase activity is the S254. Pyruvic acid (Ser); by autocatalysis is present on S254. A disordered region spans residues 294–322 (EVEPVPLPEEEIKAEHDASPLVDDKKDET). Positions 303–322 (EEIKAEHDASPLVDDKKDET) are enriched in basic and acidic residues.

Belongs to the phosphatidylserine decarboxylase family. PSD-B subfamily. Prokaryotic type I sub-subfamily. In terms of assembly, heterodimer of a large membrane-associated beta subunit and a small pyruvoyl-containing alpha subunit. Pyruvate serves as cofactor. In terms of processing, is synthesized initially as an inactive proenzyme. Formation of the active enzyme involves a self-maturation process in which the active site pyruvoyl group is generated from an internal serine residue via an autocatalytic post-translational modification. Two non-identical subunits are generated from the proenzyme in this reaction, and the pyruvate is formed at the N-terminus of the alpha chain, which is derived from the carboxyl end of the proenzyme. The autoendoproteolytic cleavage occurs by a canonical serine protease mechanism, in which the side chain hydroxyl group of the serine supplies its oxygen atom to form the C-terminus of the beta chain, while the remainder of the serine residue undergoes an oxidative deamination to produce ammonia and the pyruvoyl prosthetic group on the alpha chain. During this reaction, the Ser that is part of the protease active site of the proenzyme becomes the pyruvoyl prosthetic group, which constitutes an essential element of the active site of the mature decarboxylase.

It is found in the cell membrane. It catalyses the reaction a 1,2-diacyl-sn-glycero-3-phospho-L-serine + H(+) = a 1,2-diacyl-sn-glycero-3-phosphoethanolamine + CO2. It functions in the pathway phospholipid metabolism; phosphatidylethanolamine biosynthesis; phosphatidylethanolamine from CDP-diacylglycerol: step 2/2. Its function is as follows. Catalyzes the formation of phosphatidylethanolamine (PtdEtn) from phosphatidylserine (PtdSer). This chain is Phosphatidylserine decarboxylase proenzyme, found in Salmonella arizonae (strain ATCC BAA-731 / CDC346-86 / RSK2980).